The chain runs to 312 residues: Aquaporin Lacbi1:391485 (312 aa).

Residues 1 to 50 (MDDKFDDDALPNSKTTPEDYGDKLAEYDYTNTFPNTWMRLREPFREYIAE) are Cytoplasmic-facing. The helical transmembrane segment at 51 to 71 (FVGVAVLIIFGVGADCQVVLS) threads the bilayer. Residues 72 to 89 (ANTGVAPSPKGDYLSLNC) are Extracellular-facing. The chain crosses the membrane as a helical span at residues 90–110 (GWAIGTAMGVWISGGISGGHI). Residues 111–113 (NPA) carry the NPA 1 motif. Over 111 to 128 (NPAVTLALMAWRGFPWWK) the chain is Cytoplasmic. The chain crosses the membrane as a helical span at residues 129–149 (VPGFIFAQLLGGIVGAGLVYV). The Extracellular segment spans residues 150 to 183 (NYIHAIDIVEGGRHIRTLDTAGLFATYAADYMTN). Asn-183 carries N-linked (GlcNAc...) asparagine glycosylation. A helical membrane pass occupies residues 184–204 (VSCFFSEFLATAVLIVVIHAM). The Cytoplasmic segment spans residues 205–213 (NDKRNAPPP). Residues 214–234 (AGLAPLVLFFLILGIGASLGM) form a helical membrane-spanning segment. The Extracellular segment spans residues 235–267 (ETGYAINPARDLGPRMLTAMVGYGRQVFAFRNQ). An NPA 2 motif is present at residues 241–243 (NPA). The chain crosses the membrane as a helical span at residues 268-288 (YWIWCPVIAPFLGAQVGTIFY). Over 289 to 312 (DLFFYKGQDNVFGRLGSHIHISPA) the chain is Cytoplasmic.

Belongs to the MIP/aquaporin (TC 1.A.8) family.

It is found in the membrane. The catalysed reaction is H2O(in) = H2O(out). The enzyme catalyses glycerol(in) = glycerol(out). It carries out the reaction NH4(+)(in) = NH4(+)(out). Its function is as follows. Water channel required to facilitate the transport of water across membranes. In addition to water, also shows strong glycerol and ammonium transport activities. May be involved in fungal nitrogen (ammonium) support of the plant host in symbiosis. Glycerol accumulation has never been observed in ectomycorrhizal (ECM) fungi, therefore, glycerol permeability of Lacbi1:391485 might be a relict of the affiliation of the protein to the group of aquaglyceroporins, and other osmotic active compounds (e.g. trehalose or mannitol) may have taken over glycerol function in ECM fungi. This Laccaria bicolor (strain S238N-H82 / ATCC MYA-4686) (Bicoloured deceiver) protein is Aquaporin Lacbi1:391485.